The following is a 627-amino-acid chain: UvrABC system protein C (627 aa).

The 80-residue stretch at 26–105 folds into the GIY-YIG domain; that stretch reads PEPGVYFMRD…IKQHQPYFNV (80 aa). The region spanning 215–250 is the UVR domain; it reads QELIDILSEQMEKAAEALNFEVAARIRDQIAGLKSL.

It belongs to the UvrC family. As to quaternary structure, interacts with UvrB in an incision complex.

Its subcellular location is the cytoplasm. In terms of biological role, the UvrABC repair system catalyzes the recognition and processing of DNA lesions. UvrC both incises the 5' and 3' sides of the lesion. The N-terminal half is responsible for the 3' incision and the C-terminal half is responsible for the 5' incision. This is UvrABC system protein C from Trichormus variabilis (strain ATCC 29413 / PCC 7937) (Anabaena variabilis).